The primary structure comprises 434 residues: UPF0597 protein CLB_1949 (434 aa).

It belongs to the UPF0597 family.

This chain is UPF0597 protein CLB_1949, found in Clostridium botulinum (strain ATCC 19397 / Type A).